A 637-amino-acid chain; its full sequence is 1-deoxy-D-xylulose-5-phosphate synthase (637 aa).

Thiamine diphosphate contacts are provided by residues His-73 and Ser-113–Ala-115. Asp-145 serves as a coordination point for Mg(2+). Residues Gly-146 to Ala-147, Asn-175, Tyr-286, and Glu-367 contribute to the thiamine diphosphate site. Asn-175 lines the Mg(2+) pocket.

The protein belongs to the transketolase family. DXPS subfamily. Homodimer. The cofactor is Mg(2+). Requires thiamine diphosphate as cofactor.

The catalysed reaction is D-glyceraldehyde 3-phosphate + pyruvate + H(+) = 1-deoxy-D-xylulose 5-phosphate + CO2. It functions in the pathway metabolic intermediate biosynthesis; 1-deoxy-D-xylulose 5-phosphate biosynthesis; 1-deoxy-D-xylulose 5-phosphate from D-glyceraldehyde 3-phosphate and pyruvate: step 1/1. Its function is as follows. Catalyzes the acyloin condensation reaction between C atoms 2 and 3 of pyruvate and glyceraldehyde 3-phosphate to yield 1-deoxy-D-xylulose-5-phosphate (DXP). In Thermobifida fusca (strain YX), this protein is 1-deoxy-D-xylulose-5-phosphate synthase.